Here is a 238-residue protein sequence, read N- to C-terminus: Cell division protein A (238 aa).

As to quaternary structure, interacts with CdvB.

The protein resides in the cytoplasm. The protein localises to the nucleoid. Its subcellular location is the cell membrane. Functionally, part of a cell division machinery. The CdvA, CdvB and CdvC proteins polymerize between segregating nucleoids and persist throughout cell division, forming a successively smaller structure during constriction. CdvA is a membrane interacting protein that recruits ESCRT-III homologs to the membrane. The chain is Cell division protein A from Sulfolobus acidocaldarius (strain ATCC 33909 / DSM 639 / JCM 8929 / NBRC 15157 / NCIMB 11770).